The sequence spans 376 residues: DNA polymerase IV (376 aa).

Residues 6 to 187 form the UmuC domain; sequence IIHIDMDAFF…LSIGKFYGVG (182 aa). Positions 10 and 105 each coordinate Mg(2+). Residue Glu106 is part of the active site.

Belongs to the DNA polymerase type-Y family. In terms of assembly, monomer. Mg(2+) serves as cofactor.

The protein localises to the cytoplasm. The catalysed reaction is DNA(n) + a 2'-deoxyribonucleoside 5'-triphosphate = DNA(n+1) + diphosphate. Poorly processive, error-prone DNA polymerase involved in untargeted mutagenesis. Copies undamaged DNA at stalled replication forks, which arise in vivo from mismatched or misaligned primer ends. These misaligned primers can be extended by PolIV. Exhibits no 3'-5' exonuclease (proofreading) activity. May be involved in translesional synthesis, in conjunction with the beta clamp from PolIII. The polypeptide is DNA polymerase IV (Desulfotalea psychrophila (strain LSv54 / DSM 12343)).